The sequence spans 647 residues: A-type voltage-gated potassium channel KCND1 (647 aa).

At 1-183 (MAAGVATWLP…RAFENPHTST (183 aa)) the chain is on the cytoplasmic side. Positions 2-20 (AAGVATWLPFARAAAVGWL) are interaction with KCNIP1, KCNIP2, and other family members. Zn(2+) is bound by residues H104, C131, and C132. Residues 144–164 (AQRLAEDEEAEQTGDGPALPA) form a disordered region. Residues 184 to 205 (AALVFYYVTGFFIAVSVIANVV) traverse the membrane as a helical segment. At 206–230 (ETIPCRGPARRPPREQPCGDRFPLA) the chain is on the extracellular side. Residues 231-252 (FFCMDTACVLIFTGEYLLRLFA) traverse the membrane as a helical segment. Topologically, residues 253–263 (APSRCRFLRSV) are cytoplasmic. A helical transmembrane segment spans residues 264-284 (MSLIDVVAILPYYIGLLVPKN). Over 285–287 (EDV) the chain is Extracellular. A helical; Voltage-sensor membrane pass occupies residues 288–308 (SGAFVTLRVFRVFRIFKFSRH). Residues 309 to 323 (SQGLRILGYTLKSCA) lie on the Cytoplasmic side of the membrane. Positions 310–323 (QGLRILGYTLKSCA) are S4-S5 linker. The helical transmembrane segment at 324–345 (SELGFLLFSLTMAIIIFATVMF) threads the bilayer. Residues 346–359 (YAEKGTSKTNFTSI) lie on the Extracellular side of the membrane. Residues 360 to 371 (PAAFWYTIVTMT) constitute an intramembrane region (helical). Residues 372–377 (TLGYGD) carry the Selectivity filter motif. An intramembrane segment occupies 372 to 379 (TLGYGDMV). Over 380-386 (PSTIAGK) the chain is Extracellular. A helical transmembrane segment spans residues 387 to 415 (IFGSICSLSGVLVIALPVPVIVSNFSRIY). The Cytoplasmic portion of the chain corresponds to 416–647 (HQNQRADKRR…LPETVKISSL (232 aa)). Residues 474–489 (FEQQHHHLLHCLEKTT) form a required for dendritic targeting region. Positions 510-520 (GRTSRSTSVSS) are enriched in low complexity. Residues 510 to 531 (GRTSRSTSVSSQPVGPSSLLSS) are disordered. Polar residues predominate over residues 521 to 530 (QPVGPSSLLS). S555 carries the post-translational modification Phosphoserine. Disordered stretches follow at residues 564-584 (GLRR…PHDS) and 601-634 (IPTP…RLGT).

The protein belongs to the potassium channel family. D (Shal) (TC 1.A.1.2) subfamily. Kv4.1/KCND1 sub-subfamily. In terms of assembly, component of heteromultimeric potassium channels. Identified in potassium channel complexes containing KCND1, KCND2, KCND3, KCNIP1, KCNIP2, KCNIP3, KCNIP4, DPP6 and DPP10. In terms of tissue distribution, detected in carotid body chemoreceptor cells and in frontal cortex.

It is found in the cell membrane. The enzyme catalyses K(+)(in) = K(+)(out). Functionally, A-type voltage-gated potassium channel that mediates transmembrane potassium transport in excitable membranes in the brain. Mediates A-type current I(SA) in suprachiasmatic nucleus (SCN) neurons. Exhibits a low-threshold A-type current with a hyperpolarized steady-state inactivation midpoint and the recovery process was steeply voltage-dependent, with recovery being markedly faster at more negative potentials. May regulates repetitive firing rates in the suprachiasmatic nucleus (SCN) neurons and circadian rhythms in neuronal excitability and behavior. Contributes to the regulation of the circadian rhythm of action potential firing in suprachiasmatic nucleus neurons, which regulates the circadian rhythm of locomotor activity. The regulatory subunit KCNIP1 modulates the kinetics of channel inactivation, increases the current amplitudes and accelerates recovery from inactivation, shifts activation in a depolarizing direction. The regulatory subunit DPP10 decreases the voltage sensitivity of the inactivation channel gating. This is A-type voltage-gated potassium channel KCND1 from Oryctolagus cuniculus (Rabbit).